The sequence spans 586 residues: Aspartate--tRNA(Asp/Asn) ligase (586 aa).

Glu172 is an L-aspartate binding site. An aspartate region spans residues 196–199 (QLYK). Arg218 serves as a coordination point for L-aspartate. Residues 218–220 (RDE) and Gln227 each bind ATP. His446 provides a ligand contact to L-aspartate. Glu480 provides a ligand contact to ATP. Arg487 contacts L-aspartate. 532 to 535 (GIDR) provides a ligand contact to ATP.

Belongs to the class-II aminoacyl-tRNA synthetase family. Type 1 subfamily. Homodimer.

The protein resides in the cytoplasm. The enzyme catalyses tRNA(Asx) + L-aspartate + ATP = L-aspartyl-tRNA(Asx) + AMP + diphosphate. Its function is as follows. Aspartyl-tRNA synthetase with relaxed tRNA specificity since it is able to aspartylate not only its cognate tRNA(Asp) but also tRNA(Asn). Reaction proceeds in two steps: L-aspartate is first activated by ATP to form Asp-AMP and then transferred to the acceptor end of tRNA(Asp/Asn). This Borrelia garinii subsp. bavariensis (strain ATCC BAA-2496 / DSM 23469 / PBi) (Borreliella bavariensis) protein is Aspartate--tRNA(Asp/Asn) ligase.